Reading from the N-terminus, the 232-residue chain is Large ribosomal subunit protein uL1 (232 aa).

The protein belongs to the universal ribosomal protein uL1 family. Part of the 50S ribosomal subunit.

Binds directly to 23S rRNA. The L1 stalk is quite mobile in the ribosome, and is involved in E site tRNA release. Functionally, protein L1 is also a translational repressor protein, it controls the translation of the L11 operon by binding to its mRNA. The chain is Large ribosomal subunit protein uL1 from Burkholderia lata (strain ATCC 17760 / DSM 23089 / LMG 22485 / NCIMB 9086 / R18194 / 383).